Reading from the N-terminus, the 556-residue chain is Phosphoglucomutase (556 aa).

Alpha-D-glucose 1,6-bisphosphate contacts are provided by Arg-22 and Ser-114. Residue Ser-114 is the Phosphoserine intermediate of the active site. The Mg(2+) site is built by Ser-114, Asp-279, Asp-281, and Asp-283. Ser-114 carries the post-translational modification Phosphoserine. Asp-283, Arg-284, Thr-347, Glu-366, Ser-368, and Lys-379 together coordinate alpha-D-glucose 1,6-bisphosphate.

This sequence belongs to the phosphohexose mutase family. In terms of assembly, monomer. Mg(2+) is required as a cofactor.

The protein localises to the cytoplasm. The enzyme catalyses alpha-D-glucose 1-phosphate = alpha-D-glucose 6-phosphate. The catalysed reaction is O-phospho-L-seryl-[protein] + alpha-D-glucose 1-phosphate = alpha-D-glucose 1,6-bisphosphate + L-seryl-[protein]. It carries out the reaction alpha-D-glucose 1,6-bisphosphate + L-seryl-[protein] = O-phospho-L-seryl-[protein] + alpha-D-glucose 6-phosphate. Catalyzes the reversible isomerization of alpha-D-glucose 1-phosphate to alpha-D-glucose 6-phosphate. The mechanism proceeds via the intermediate compound alpha-D-glucose 1,6-bisphosphate. Key enzyme in hexose metabolism. The reverse reaction is an essential step for biosynthesis because glucose 1-phosphate is the starting point for the synthesis of UDP-glucose, which acts as a precursor for the synthesis of oligosaccharides and trehalose. In Emericella nidulans (strain FGSC A4 / ATCC 38163 / CBS 112.46 / NRRL 194 / M139) (Aspergillus nidulans), this protein is Phosphoglucomutase (pgmB).